The following is a 213-amino-acid chain: uncharacterized protein (213 aa).

This is an uncharacterized protein from Acidianus two-tailed virus (ATV).